Here is a 405-residue protein sequence, read N- to C-terminus: Dynactin subunit 2 (405 aa).

Residues 1-24 (MADPKYANLPGIASNEPDVYETSD) form a disordered region. Coiled coils occupy residues 102–125 (QQKY…IQTS) and 379–405 (QQTM…KLNK).

This sequence belongs to the dynactin subunit 2 family. Subunit of dynactin, a multiprotein complex part of a tripartite complex with dynein and a adapter, such as BICDL1, BICD2 or HOOK3. The dynactin complex is built around ACTR1A/ACTB filament and consists of an actin-related filament composed of a shoulder domain, a pointed end and a barbed end. Its length is defined by its flexible shoulder domain. The soulder is composed of 2 DCTN1 subunits, 4 DCTN2 and 2 DCTN3.

It localises to the cytoplasm. The protein localises to the cytoskeleton. Its subcellular location is the microtubule organizing center. It is found in the centrosome. The protein resides in the membrane. In terms of biological role, part of the dynactin complex that activates the molecular motor dynein for ultra-processive transport along microtubules. In the dynactin soulder domain, binds the ACTR1A filament and acts as a molecular ruler to determine the length. Modulates cytoplasmic dynein binding to an organelle, and plays a role in prometaphase chromosome alignment and spindle organization during mitosis. Involved in anchoring microtubules to centrosomes. The sequence is that of Dynactin subunit 2 (dctn2) from Danio rerio (Zebrafish).